The chain runs to 212 residues: FMN-dependent NADH:quinone oxidoreductase (212 aa).

FMN-binding positions include serine 10, 16–18 (SFS), and 98–101 (MWNF).

Belongs to the azoreductase type 1 family. Homodimer. Requires FMN as cofactor.

The enzyme catalyses 2 a quinone + NADH + H(+) = 2 a 1,4-benzosemiquinone + NAD(+). The catalysed reaction is N,N-dimethyl-1,4-phenylenediamine + anthranilate + 2 NAD(+) = 2-(4-dimethylaminophenyl)diazenylbenzoate + 2 NADH + 2 H(+). In terms of biological role, quinone reductase that provides resistance to thiol-specific stress caused by electrophilic quinones. Its function is as follows. Also exhibits azoreductase activity. Catalyzes the reductive cleavage of the azo bond in aromatic azo compounds to the corresponding amines. This chain is FMN-dependent NADH:quinone oxidoreductase, found in Desulfotalea psychrophila (strain LSv54 / DSM 12343).